A 700-amino-acid polypeptide reads, in one-letter code: Cap-specific mRNA (nucleoside-2'-O-)-methyltransferase 2 (700 aa).

A disordered region spans residues 1 to 21 (MSFRSSPQGKPHPMTDYQSIR). The 213-residue stretch at 109-321 (EFVTVAWCKL…VYVICLNYNK (213 aa)) folds into the Adrift-type SAM-dependent 2'-O-MTase domain. Lys-117 is an active-site residue. Gly-143, Trp-164, and Asp-234 together coordinate S-adenosyl-L-methionine. Asp-234 is a catalytic residue. Lys-274 acts as the Proton acceptor in catalysis.

The protein localises to the nucleus. It catalyses the reaction a 5'-end (N(7)-methyl 5'-triphosphoguanosine)-(2'-O-methyl-ribonucleoside)-(ribonucleotide) in mRNA + S-adenosyl-L-methionine = a 5'-end (N(7)-methyl 5'-triphosphoguanosine)-(2'-O-methyl-ribonucleoside)-(2'-O-methyl-ribonucleotide) in mRNA + S-adenosyl-L-homocysteine + H(+). Probable S-adenosyl-L-methionine-dependent methyltransferase that mediates mRNA cap2 2'-O-ribose methylation to the 5'-cap structure of mRNAs. May methylate the ribose of the second nucleotide of a m(7)GpppG-capped mRNA (cap0) to produce m(7)GpppRmpNm (cap2). Regulates expression of tracheal genes required for pathfinding on the segmental nerve. This is Cap-specific mRNA (nucleoside-2'-O-)-methyltransferase 2 (cmtr2) from Drosophila melanogaster (Fruit fly).